Consider the following 275-residue polypeptide: Transmembrane protein 45A (275 aa).

5 helical membrane-spanning segments follow: residues His7–Leu27, Ile51–Ile71, Phe100–Val120, Ile150–Glu170, and Ile218–Met238.

The protein belongs to the TMEM45 family.

It is found in the membrane. The polypeptide is Transmembrane protein 45A (TMEM45A) (Homo sapiens (Human)).